A 307-amino-acid polypeptide reads, in one-letter code: MKLTIATALASILLIGSANVANCCDCGCPTTTTTCAPRTTQPPCTTTTTTTTTTCAPPTQQSTTQPPCTTSKPTTPKQTTTQLPCTTPTTTKATTTKPTTTKATTTKATTTKPTTTKQTTTQLPCTTPTTTKQTTTQLPCTTPTTTKPTTTKPTTTKPTTTKPTTTKPTTTKPTTTKPTTTKPTTTKPTTTKPTTTKPTTTKPTTTKPTTTKPTTTKPTTTKPTTTKPTTTKPTTTKPTTTKPTTTKPTTTKPTTPKPCGCKSCGPGGEPCNGCAKRDALCQDLNGVLRNLERKIRQCVCGEPQWLL.

An N-terminal signal peptide occupies residues 1 to 23 (MKLTIATALASILLIGSANVANC). The tract at residues 56-257 (APPTQQSTTQ…PTTTKPTTPK (202 aa)) is disordered.

O-glycosylated by Pgnat9 in salivary glands. In terms of tissue distribution, specifically expressed in the salivary gland.

Its subcellular location is the secreted. The polypeptide is Salivary glue protein Sgs-3 (Drosophila melanogaster (Fruit fly)).